We begin with the raw amino-acid sequence, 437 residues long: Neomycin resistance protein (437 aa).

2 disordered regions span residues 161–285 (GQRG…EEEA) and 305–338 (VSGA…PVPD). Low complexity predominate over residues 203–229 (PPTGARSPGATAGARATASTSSSSVRS). Over residues 324–338 (RRRHRGRRHGRPVPD) the composition is skewed to basic residues.

It belongs to the Gram-positive plasmids replication protein type 1 family.

This is Neomycin resistance protein from Streptomyces cyanogenus.